A 1074-amino-acid polypeptide reads, in one-letter code: ADAMTS-like protein 4 (1074 aa).

An N-terminal signal peptide occupies residues 1-24 (MENWTGRPWLYLLLLLSLPQLCLD). The region spanning 48–93 (GPWVQWASCSQPCGVGVQRRSRTCQLPTVQLHPSLPLPPRPPRHPE) is the TSP type-1 1 domain. Residues 77–342 (QLHPSLPLPP…QHPGAWLPLL (266 aa)) are disordered. Over residues 103 to 119 (RPQTSPETLPLYRTQSR) the composition is skewed to polar residues. The span at 132-152 (LGREETQEIRAARRSRLRDPI) shows a compositional bias: basic and acidic residues. A compositionally biased stretch (polar residues) spans 206 to 226 (ANGSPQTELPPTELSVHTPSP). The segment covering 310–323 (GQQGQGPWGTGGTP) has biased composition (gly residues). An N-linked (GlcNAc...) (complex) asparagine glycan is attached at Asn490. 5 consecutive TSP type-1 domains span residues 723 to 782 (CPPY…QLRL), 783 to 842 (CGHW…GPCT), 845 to 909 (WFHS…GPCE), 910 to 969 (RTWR…QGQA), and 970 to 1026 (CQDR…QPCS). Asn773 carries N-linked (GlcNAc...) asparagine glycosylation. The region spanning 1029–1066 (PDDQCKDSSPHCPLVVQARLCVYPYYTATCCRSCAHVL) is the PLAC domain.

In terms of assembly, interacts with CTSB. Interacts with FBN1. In terms of processing, N-glycosylated. Can be O-fucosylated by POFUT2 on a serine or a threonine residue found within the consensus sequence C1-X(2)-(S/T)-C2-G of the TSP type-1 repeat domains where C1 and C2 are the first and second cysteine residue of the repeat, respectively. Fucosylated repeats can then be further glycosylated by the addition of a beta-1,3-glucose residue by the glucosyltransferase, B3GALTL. Fucosylation mediates the efficient secretion of ADAMTS family members. Can also be C-glycosylated with one or two mannose molecules on tryptophan residues within the consensus sequence W-X-X-W of the TPRs. N- and C-glycosylations can also facilitate secretion. As to expression, expressed in colon, heart, leukocyte, liver, lung, skeletal muscle, spleen, testis and placenta. Weaker expression in bone marrow, brain tissue, kidney and pancreas. Expression studies in fetal tissues reveal strong expression in heart, kidney, liver, lung and skeletal muscle, but weaker expression in fetal brain and skin.

The protein localises to the secreted. Its subcellular location is the extracellular space. It localises to the extracellular matrix. Positive regulation of apoptosis. May facilitate FBN1 microfibril biogenesis. The protein is ADAMTS-like protein 4 (ADAMTSL4) of Homo sapiens (Human).